The following is a 326-amino-acid chain: Tagatose 1,6-diphosphate aldolase (326 aa).

The protein belongs to the aldolase LacD family.

The enzyme catalyses D-tagatofuranose 1,6-bisphosphate = D-glyceraldehyde 3-phosphate + dihydroxyacetone phosphate. It participates in carbohydrate metabolism; D-tagatose 6-phosphate degradation; D-glyceraldehyde 3-phosphate and glycerone phosphate from D-tagatose 6-phosphate: step 2/2. The polypeptide is Tagatose 1,6-diphosphate aldolase (Staphylococcus aureus (strain MSSA476)).